Here is a 151-residue protein sequence, read N- to C-terminus: IFN signaling evasion protein OPG029 (151 aa).

This sequence belongs to the orthopoxvirus OPG029 family. In terms of assembly, interacts with host TANK, TBKBP1 and AZI2; these interactions prevent interferon production. Interacts with host STAT2.

In terms of biological role, prevents establishment of cellular antiviral state by blocking virus-induced phosphorylation and activation of interferon regulatory factors 3/IRF3 and 7/IRF7, transcription factors critical for the induction of interferons alpha and beta. This blockage is produced through the inhibition of host TBK1, by binding host TBK1 adapter proteins TBKBP1 and AZI2, thereby producing a strong inhibition of the phosphorylation and activation of IRF3 and IRF7. Also acts as an inhibitor of the cellular response to type I IFN by interacting with host STAT2. Mechanistically, exerts its inhibitory effect after host ISGF3 complex (composed of STAT1, STAT2 and IRF9) binding to the interferon stimulated response element (ISRE). This is IFN signaling evasion protein OPG029 (OPG029) from Vaccinia virus (strain Western Reserve) (VACV).